We begin with the raw amino-acid sequence, 357 residues long: S-adenosylmethionine:tRNA ribosyltransferase-isomerase (357 aa).

The protein belongs to the QueA family. In terms of assembly, monomer.

The protein resides in the cytoplasm. It carries out the reaction 7-aminomethyl-7-carbaguanosine(34) in tRNA + S-adenosyl-L-methionine = epoxyqueuosine(34) in tRNA + adenine + L-methionine + 2 H(+). It functions in the pathway tRNA modification; tRNA-queuosine biosynthesis. Its function is as follows. Transfers and isomerizes the ribose moiety from AdoMet to the 7-aminomethyl group of 7-deazaguanine (preQ1-tRNA) to give epoxyqueuosine (oQ-tRNA). The polypeptide is S-adenosylmethionine:tRNA ribosyltransferase-isomerase (Buchnera aphidicola subsp. Schizaphis graminum (strain Sg)).